The chain runs to 213 residues: RPW8-like protein 3 (213 aa).

Residues 1 to 153 (MPVSEIMAGA…ITRQPTDCIC (153 aa)) form the RPW8 domain. A helical transmembrane segment spans residues 7-23 (MAGAALGLALQVLHDAI). 2 coiled-coil regions span residues 70-93 (EDLK…RRRN) and 125-147 (VDIK…ITRQ). The N-linked (GlcNAc...) asparagine glycan is linked to asparagine 157.

Belongs to the plant RPW8 protein family.

The protein resides in the membrane. Probable disease resistance (R) protein. The protein is RPW8-like protein 3 of Arabidopsis thaliana (Mouse-ear cress).